A 185-amino-acid chain; its full sequence is Ribosome-recycling factor (185 aa).

The protein belongs to the RRF family.

It is found in the cytoplasm. Responsible for the release of ribosomes from messenger RNA at the termination of protein biosynthesis. May increase the efficiency of translation by recycling ribosomes from one round of translation to another. This Syntrophobacter fumaroxidans (strain DSM 10017 / MPOB) protein is Ribosome-recycling factor.